Consider the following 894-residue polypeptide: Probable ion channel SYM8 (894 aa).

The segment at 1–124 is disordered; the sequence is MAKSNEEPNS…PPSLPIAITK (124 aa). Polar residues-rich tracts occupy residues 7-16, 24-33, and 44-63; these read EPNSNLNTNK, TLAQQPSLNL, and IGNS…QRNY. The next 4 membrane-spanning stretches (helical) occupy residues 134–154, 204–224, 267–287, and 319–339; these read SPIF…SAFL, TISL…YKYI, LALL…LYAV, and IVSV…LGLV. RCK N-terminal domains lie at 360–501 and 620–769; these read RNHV…ETVV and PEKI…DKSI. The stretch at 390 to 415 forms a coiled coil; the sequence is VIVVLAEKEKEEMEMDIAKLEFDFMG.

The protein belongs to the castor/pollux (TC 1.A.1.23) family. As to quaternary structure, homotetramer.

The protein localises to the nucleus membrane. Functionally, required for both rhizobial and mycorrhizal symbiosis. Involved in Nod-factor-induced calcium spiking. May induce a change in membrane polarization that activates the opening of a calcium channel required for calcium spiking. Might be calcium gated. The chain is Probable ion channel SYM8 (SYM8) from Pisum sativum (Garden pea).